The sequence spans 152 residues: Large-conductance mechanosensitive channel (152 aa).

2 helical membrane-spanning segments follow: residues valine 14–leucine 34 and glycine 81–isoleucine 101.

It belongs to the MscL family. Homopentamer.

It localises to the cell membrane. Channel that opens in response to stretch forces in the membrane lipid bilayer. May participate in the regulation of osmotic pressure changes within the cell. The protein is Large-conductance mechanosensitive channel of Clostridium perfringens (strain 13 / Type A).